The chain runs to 127 residues: Alpha-hordothionin (127 aa).

The N-terminal stretch at 1-18 (MVCLLILGLVLEQVQVEG) is a signal peptide. 4 disulfide bridges follow: C21-C57, C22-C49, C30-C47, and C34-C43. Positions 64–127 (LALVSNSDEP…GDAGLTSLTA (64 aa)) are cleaved as a propeptide — acidic domain.

Belongs to the plant thionin (TC 1.C.44) family. 4 C-C subfamily.

It is found in the secreted. In terms of biological role, thionins are small plant proteins which are toxic to animal cells. They seem to exert their toxic effect at the level of the cell membrane. Their precise function is not known. The chain is Alpha-hordothionin (THI1.1) from Hordeum vulgare (Barley).